Consider the following 293-residue polypeptide: Carbapenem-hydrolyzing beta-lactamase KPC (293 aa).

Residues 1–24 (MSLYRRLVLLSCLSWPLAGFSATA) form the signal peptide. The active-site Acyl-ester intermediate is the S69. E167 acts as the Proton acceptor in catalysis. 233–235 (KTG) serves as a coordination point for substrate.

The protein belongs to the class-A beta-lactamase family.

The catalysed reaction is a beta-lactam + H2O = a substituted beta-amino acid. Its activity is regulated as follows. Not inhibited by EDTA, inhibited by clavulanic acid and tazobactam. Hydrolyzes carbapenems, penicillins, cephalosporins and aztreonam with varying efficiency. The polypeptide is Carbapenem-hydrolyzing beta-lactamase KPC (bla) (Klebsiella oxytoca).